A 240-amino-acid chain; its full sequence is Gas vesicle protein C (240 aa).

Over residues 1–13 (MALKDKWQQDRIG) the composition is skewed to basic and acidic residues. Residues 1–20 (MALKDKWQQDRIGRQQGVQE) form a disordered region. 5 repeats span residues 18-50 (VQERQQQVQTTLSLWQQERQNQALDDQESRQGF), 51-83 (VTGVQQQTQELLTNISTERLWVAQQQREQLENF), 84-116 (IQQLSQEVGEFLQQTIEERSQVAAQLHQQLSEF), 117-149 (REDLEYRVTDLLANYQKQRLEARETLLEDLAIF), and 150-207 (RQTL…LQDY). Residues 18–207 (VQERQQQVQT…GVFRAELQDY (190 aa)) are 5 X 33 AA tandem repeats.

The protein belongs to the gas vesicle GvpC family.

The protein resides in the gas vesicle. Its function is as follows. Confers stability, involved in shaping gas vesicles, hollow, gas filled proteinaceous nanostructures. During planktonic growth they allow positioning of the organism at a favorable depth for light or nutrient acquisition. This Planktothrix agardhii (Oscillatoria agardhii) protein is Gas vesicle protein C.